Reading from the N-terminus, the 451-residue chain is Protein SAR DEFICIENT 1 (451 aa).

The DNA-binding stretch occupies residues 149–270 (DKWTSDEFES…AFHKKLSSRH (122 aa)).

Belongs to the plant ACBP60 protein family. (Microbial infection) Interacts with V.dahliae SCP41.

The protein localises to the nucleus. Its function is as follows. Transcription activator that binds DNA in a sequence-specific manner, 5'-GAAATTTTGG-3', to promote the expression of target genes. Recruited to the promoter of ICS1 and other defense-related genes (e.g. PR1 and SID2) in response to both biotic (e.g. Pseudomonas syringae pv. maculicola ES4326) and abiotic stresses (e.g. UV-B), thus triggering slow defense responses by stimulating salicylic acid (SA) biosynthesis. Required for basal and systemic acquired resistance to P.syringae pv. maculicola and Hyaloperonospora arabidopsidis. This chain is Protein SAR DEFICIENT 1, found in Arabidopsis thaliana (Mouse-ear cress).